Reading from the N-terminus, the 312-residue chain is R2-like ligand binding oxidase (312 aa).

Mn(2+) contacts are provided by E68, E101, and H104. Residues 71 to 162 (VTQDIQPFMA…QAQVRASVTY (92 aa)) constitute a cross-link (3-(O4'-tyrosyl)-valine (Val-Tyr)). A Fe cation-binding site is contributed by E101. E167, E202, and H205 together coordinate Fe cation.

It belongs to the ribonucleoside diphosphate reductase small chain family. R2-like ligand binding oxidase subfamily. As to quaternary structure, homodimer. Requires Fe cation as cofactor. Mn(2+) is required as a cofactor.

Its function is as follows. Probable oxidase that might be involved in lipid metabolism. In Mycolicibacterium gilvum (strain PYR-GCK) (Mycobacterium gilvum (strain PYR-GCK)), this protein is R2-like ligand binding oxidase.